A 358-amino-acid polypeptide reads, in one-letter code: Serine/threonine-protein phosphatase 2A activator 2 (358 aa).

Interacts with the phosphatase PP2A catalytic subunits PPH21 and PPH22. Forms a ternary complex with PPH21-TAP42.

It localises to the cytoplasm. It carries out the reaction [protein]-peptidylproline (omega=180) = [protein]-peptidylproline (omega=0). In terms of biological role, PPIases accelerate the folding of proteins. It catalyzes the cis-trans isomerization of proline imidic peptide bonds in oligopeptides. Acts as a regulatory subunit for TAP42-associated PP2A-like phosphatases modulating their activity or substrate specificity, probably by inducing a conformational change in the catalytic subunit, a direct target of the PPIase. Can reactivate inactive phosphatase PP2A-phosphatase methylesterase complexes (PP2Ai) in presence of ATP and Mg(2+) by dissociating the inactive form from the complex. Acts also inhibitory at high concentrations. Involved in the regulation of cell cycle progression, mitotic spindle formation and bud morphogenesis. The protein is Serine/threonine-protein phosphatase 2A activator 2 (RRD2) of Saccharomyces cerevisiae (strain ATCC 204508 / S288c) (Baker's yeast).